Consider the following 895-residue polypeptide: Iron-regulated surface determinant protein H (895 aa).

Positions 1-40 (MNKHHPKLRSFYSIRKSTLGVASVIVSTLFLITSQHQAQA) are cleaved as a signal peptide. Positions 42-85 (ENTNTSDKISENQNNNATTTQPPKDTNQTQPATQPANTAKNYPA) are disordered. A compositionally biased stretch (low complexity) spans 53–62 (NQNNNATTTQ). Residues 63–81 (PPKDTNQTQPATQPANTAK) show a composition bias toward polar residues. The NEAT 1 domain occupies 105–232 (DIGPREQVNF…IYNDPSLVKS (128 aa)). The tract at residues 241–324 (NDQSSSVASN…NQSDVNQQYP (84 aa)) is disordered. Over residues 243-276 (QSSSVASNQTNTNTSNQNISTINNANNQPQATTN) the composition is skewed to low complexity. Over residues 277–323 (MSQPAQPKSSTNADQASSQPAHETNSNGNTNDKTNESSNQSDVNQQY) the composition is skewed to polar residues. 2 NEAT domains span residues 345 to 471 (TADN…DYVD) and 543 to 660 (QLTD…TKDD). 3 disordered regions span residues 657–720 (TKDD…DNNI), 751–782 (QIAK…DSNK), and 841–868 (KTKE…GETT). 2 stretches are compositionally biased toward polar residues: residues 663–677 (SQNN…QTGQ) and 687–697 (AENSSTATNPK). 3 stretches are compositionally biased toward basic and acidic residues: residues 698-720 (DASD…DNNI), 751-765 (QIAK…KDAD), and 841-854 (KTKE…KENK). Residues 855–868 (LSQSKMLPKTGETT) are compositionally biased toward polar residues. Residues 861-865 (LPKTG) carry the LPXTG sorting signal motif. Pentaglycyl murein peptidoglycan amidated threonine is present on Thr864. Residues 865-895 (GETTSSQSWWGLYALLGMLALFIPKFRKESK) constitute a propeptide, removed by sortase.

Belongs to the IsdH family.

It is found in the secreted. The protein resides in the cell wall. In terms of biological role, binds human plasma haptoglobin-hemoglobin complexes, haptoglobin and hemoglobin. Binds haptoglobin-hemoglobin complexes with significantly higher affinity than haptoglobin alone. In Staphylococcus aureus (strain NCTC 8325 / PS 47), this protein is Iron-regulated surface determinant protein H (isdH).